The following is a 479-amino-acid chain: Aspartyl/glutamyl-tRNA(Asn/Gln) amidotransferase subunit B (479 aa).

Belongs to the GatB/GatE family. GatB subfamily. In terms of assembly, heterotrimer of A, B and C subunits.

It carries out the reaction L-glutamyl-tRNA(Gln) + L-glutamine + ATP + H2O = L-glutaminyl-tRNA(Gln) + L-glutamate + ADP + phosphate + H(+). The catalysed reaction is L-aspartyl-tRNA(Asn) + L-glutamine + ATP + H2O = L-asparaginyl-tRNA(Asn) + L-glutamate + ADP + phosphate + 2 H(+). Allows the formation of correctly charged Asn-tRNA(Asn) or Gln-tRNA(Gln) through the transamidation of misacylated Asp-tRNA(Asn) or Glu-tRNA(Gln) in organisms which lack either or both of asparaginyl-tRNA or glutaminyl-tRNA synthetases. The reaction takes place in the presence of glutamine and ATP through an activated phospho-Asp-tRNA(Asn) or phospho-Glu-tRNA(Gln). The chain is Aspartyl/glutamyl-tRNA(Asn/Gln) amidotransferase subunit B from Streptococcus equi subsp. zooepidemicus (strain MGCS10565).